A 469-amino-acid chain; its full sequence is tRNA-2-methylthio-N(6)-dimethylallyladenosine synthase (469 aa).

The MTTase N-terminal domain occupies 27–142 (KKVYIRTFGC…LPQMLAQRAR (116 aa)). Cys-36, Cys-73, Cys-105, Cys-179, Cys-183, and Cys-186 together coordinate [4Fe-4S] cluster. One can recognise a Radical SAM core domain in the interval 165 to 398 (KVDGAAAFVS…QATIEDNVRR (234 aa)). The 67-residue stretch at 401–467 (ERRVGTVQRV…PHSLRGEPVL (67 aa)) folds into the TRAM domain.

This sequence belongs to the methylthiotransferase family. MiaB subfamily. As to quaternary structure, monomer. Requires [4Fe-4S] cluster as cofactor.

Its subcellular location is the cytoplasm. The enzyme catalyses N(6)-dimethylallyladenosine(37) in tRNA + (sulfur carrier)-SH + AH2 + 2 S-adenosyl-L-methionine = 2-methylsulfanyl-N(6)-dimethylallyladenosine(37) in tRNA + (sulfur carrier)-H + 5'-deoxyadenosine + L-methionine + A + S-adenosyl-L-homocysteine + 2 H(+). In terms of biological role, catalyzes the methylthiolation of N6-(dimethylallyl)adenosine (i(6)A), leading to the formation of 2-methylthio-N6-(dimethylallyl)adenosine (ms(2)i(6)A) at position 37 in tRNAs that read codons beginning with uridine. This is tRNA-2-methylthio-N(6)-dimethylallyladenosine synthase from Leptothrix cholodnii (strain ATCC 51168 / LMG 8142 / SP-6) (Leptothrix discophora (strain SP-6)).